The following is a 316-amino-acid chain: dTDP-4-dehydro-6-deoxyglucose reductase (316 aa).

16-17 (FI) is an NAD(+) binding site. Tyrosine 151 acts as the Proton acceptor in catalysis. Lysine 155 is an NAD(+) binding site.

Belongs to the NAD(P)-dependent epimerase/dehydratase family.

It catalyses the reaction dTDP-alpha-D-fucose + NAD(+) = dTDP-4-dehydro-6-deoxy-alpha-D-glucose + NADH + H(+). The enzyme catalyses dTDP-alpha-D-fucose + NADP(+) = dTDP-4-dehydro-6-deoxy-alpha-D-glucose + NADPH + H(+). It participates in bacterial outer membrane biogenesis; LPS O-antigen biosynthesis. Its activity is regulated as follows. Inhibited by Cu(2+), while other divalent cations such as Ca(2+), Co(2+), Fe(2+), Mn(2+) and Mg(2+) have no obvious effects on enzyme activity. Catalyzes the stereospecific reduction of the C-4 keto group of dTDP-4-dehydro-6-deoxy-D-glucose, leading to dTDP-D-fucopyranose. This is a step in the biosynthesis of D-fucofuranose, a component of E.coli O52 O antigen. Is more efficient using NADH than NADPH as cosubstrate. The protein is dTDP-4-dehydro-6-deoxyglucose reductase (fcf1) of Escherichia coli.